The chain runs to 467 residues: MLGIWIVAFLFFGTSRGKEVCYERLGCFKDGLPWTRTFSTELVGLPWSPEKINTRFLLYTIHNPNAYQEISAVNSSTIQASYFGTDKITRINIAGWKTDGKWQRDMCNVLLQLEDINCINLDWINGSREYIHAVNNLRVVGAEVAYFIDVLMKKFEYSPSKVHLIGHSLGAHLAGEAGSRIPGLGRITGLDPAGPFFHNTPKEVRLDPSDANFVDVIHTNAARILFELGVGTIDACGHLDFYPNGGKHMPGCEDLITPLLKFNFNAYKKEMASFFDCNHARSYQFYAESILNPDAFIAYPCRSYTSFKAGNCFFCSKEGCPTMGHFADRFHFKNMKTNGSHYFLNTGSLSPFARWRHKLSVKLSGSEVTQGTVFLRVGGAVRKTGEFAIVSGKLEPGMTYTKLIDADVNVGNITSVQFIWKKHLFEDSQNKLGAEMVINTSGKYGYKSTFCSQDIMGPNILQNLKPC.

The N-terminal stretch at 1 to 17 (MLGIWIVAFLFFGTSRG) is a signal peptide. A disulfide bridge links cysteine 21 with cysteine 27. Asparagine 74 carries an N-linked (GlcNAc...) asparagine glycan. Cysteines 107 and 118 form a disulfide. Asparagine 125 carries an N-linked (GlcNAc...) asparagine glycan. Serine 168 (nucleophile) is an active-site residue. Catalysis depends on aspartate 191, which acts as the Charge relay system. Cysteine 252 and cysteine 277 are disulfide-bonded. Histidine 279 acts as the Charge relay system in catalysis. Disulfide bonds link cysteine 301–cysteine 312, cysteine 315–cysteine 320, and cysteine 451–cysteine 467. The PLAT domain occupies 355–467 (WRHKLSVKLS…PNILQNLKPC (113 aa)).

The protein belongs to the AB hydrolase superfamily. Lipase family. As to expression, overexpressed in hepatocellular carcinoma.

The protein localises to the secreted. It carries out the reaction a triacylglycerol + H2O = a diacylglycerol + a fatty acid + H(+). This is Pancreatic lipase-related protein 3 (PNLIPRP3) from Homo sapiens (Human).